A 473-amino-acid chain; its full sequence is H(+)/Cl(-) exchange transporter ClcA (473 aa).

Topologically, residues Met-1–Pro-32 are cytoplasmic. The chain crosses the membrane as a helical span at residues Leu-33–Val-69. Residues Gln-70 to Phe-76 are Periplasmic-facing. A helical membrane pass occupies residues Leu-77–Phe-100. Residues Gly-106–Pro-110 carry the Selectivity filter part_1 motif. Chloride is bound at residue Ser-107. Positions Ile-109–Leu-116 form an intramembrane region, helical. Over Glu-117–Arg-123 the chain is Cytoplasmic. 2 consecutive transmembrane segments (helical) span residues Trp-124–Ala-141 and Glu-148–Phe-166. The short motif at Gly-146–Pro-150 is the Selectivity filter part_2 element. At Arg-167–Thr-176 the chain is on the cytoplasmic side. 2 intramembrane regions (helical) span residues Leu-177–Ala-189 and Pro-193–Ile-201. At Glu-202–Ser-214 the chain is on the cytoplasmic side. Residues Ile-215–Phe-232 form a helical membrane-spanning segment. The Periplasmic portion of the chain corresponds to Asn-233 to Leu-252. The helical transmembrane segment at Trp-253–Gln-281 threads the bilayer. Topologically, residues Arg-282 to Glu-287 are cytoplasmic. The chain crosses the membrane as a helical span at residues Ile-288–Glu-309. At Pro-310–Ser-329 the chain is on the periplasmic side. Helical transmembrane passes span Val-330 to Ser-349 and Gly-355 to Ala-376. The Selectivity filter part_3 motif lies at Gly-355–Pro-359. Residues Ile-356 and Phe-357 each coordinate chloride. Residues Val-377–Ala-386 lie on the Periplasmic side of the membrane. Residues Gly-387 to Ser-401 constitute an intramembrane region (helical). An intramembrane region (note=Loop between two helices) is located at residues Val-402–Ala-404. An intramembrane region (helical) is located at residues Pro-405 to Thr-416. The note=Loop between two helices intramembrane region spans Asp-417–Leu-421. Residues Ile-422–Phe-438 traverse the membrane as a helical segment. The Cytoplasmic portion of the chain corresponds to Leu-439–Thr-473. Tyr-445 is a binding site for chloride.

This sequence belongs to the chloride channel (TC 2.A.49) family. ClcA subfamily. As to quaternary structure, homodimer.

It localises to the cell inner membrane. It catalyses the reaction 2 chloride(in) + H(+)(out) = 2 chloride(out) + H(+)(in). Proton-coupled chloride transporter. Functions as antiport system and exchanges two chloride ions for 1 proton. Probably acts as an electrical shunt for an outwardly-directed proton pump that is linked to amino acid decarboxylation, as part of the extreme acid resistance (XAR) response. In Salmonella newport (strain SL254), this protein is H(+)/Cl(-) exchange transporter ClcA.